Consider the following 716-residue polypeptide: Beta-galactosidase (716 aa).

E389 (proton donor) is an active-site residue. Residue E462 is the Nucleophile of the active site.

This sequence belongs to the glycosyl hydrolase 2 family. In terms of assembly, homodimer.

It carries out the reaction Hydrolysis of terminal non-reducing beta-D-galactose residues in beta-D-galactosides.. Functionally, displays beta-galactosidase activity with the artificial chromogenic substrate o-nitrophenyl-beta-D-galactopyranoside (ONPG). The sequence is that of Beta-galactosidase from Thermoanaerobacterium thermosulfurigenes (Clostridium thermosulfurogenes).